The primary structure comprises 482 residues: Glutamate--tRNA ligase (482 aa).

The short motif at 10–20 (PSPTGFLHIGN) is the 'HIGH' region element. A 'KMSKS' region motif is present at residues 253–257 (KLSKR). Residue K256 participates in ATP binding.

Belongs to the class-I aminoacyl-tRNA synthetase family. Glutamate--tRNA ligase type 1 subfamily. As to quaternary structure, monomer.

The protein localises to the cytoplasm. It catalyses the reaction tRNA(Glu) + L-glutamate + ATP = L-glutamyl-tRNA(Glu) + AMP + diphosphate. Its function is as follows. Catalyzes the attachment of glutamate to tRNA(Glu) in a two-step reaction: glutamate is first activated by ATP to form Glu-AMP and then transferred to the acceptor end of tRNA(Glu). The protein is Glutamate--tRNA ligase of Mesoplasma florum (strain ATCC 33453 / NBRC 100688 / NCTC 11704 / L1) (Acholeplasma florum).